A 379-amino-acid chain; its full sequence is Putative acetyl-CoA C-acetyltransferase VraB (379 aa).

The Acyl-thioester intermediate role is filled by Cys-86. His-338 (proton acceptor) is an active-site residue.

Belongs to the thiolase-like superfamily. Thiolase family.

This Staphylococcus aureus (strain MSSA476) protein is Putative acetyl-CoA C-acetyltransferase VraB (vraB).